A 375-amino-acid polypeptide reads, in one-letter code: Trichodiene synthase (375 aa).

It belongs to the trichodiene synthase family.

It catalyses the reaction (2E,6E)-farnesyl diphosphate = trichodiene + diphosphate. Its pathway is sesquiterpene biosynthesis; trichothecene biosynthesis. Its function is as follows. TS is a member of the terpene cyclase group of enzymes. It catalyzes the isomerization and cyclization of farnesyl pyro-phosphate to form trichodiene, the first cyclic intermediate in the biosynthetic pathway for trichothecenes. It serves to branch trichothecene biosynthesis from the isoprenoid pathway. The sequence is that of Trichodiene synthase (TRI5) from Fusarium culmorum.